The sequence spans 321 residues: Probable GDP-L-fucose synthase (321 aa).

Residue 8-14 coordinates NADP(+); the sequence is GGTGLVG. Tyr136 (proton donor/acceptor) is an active-site residue. Residues Lys140, 163 to 166, and His179 contribute to the NADP(+) site; that span reads PCNI. Arg187, Arg215, and Asp277 together coordinate substrate.

Belongs to the NAD(P)-dependent epimerase/dehydratase family. Fucose synthase subfamily. In terms of assembly, homodimer.

The enzyme catalyses GDP-beta-L-fucose + NADP(+) = GDP-4-dehydro-alpha-D-rhamnose + NADPH + H(+). It participates in nucleotide-sugar biosynthesis; GDP-L-fucose biosynthesis via de novo pathway; GDP-L-fucose from GDP-alpha-D-mannose: step 2/2. In terms of biological role, catalyzes the two-step NADP-dependent conversion of GDP-4-dehydro-6-deoxy-D-mannose to GDP-fucose, involving an epimerase and a reductase reaction. In Drosophila melanogaster (Fruit fly), this protein is Probable GDP-L-fucose synthase (Gmer).